A 387-amino-acid chain; its full sequence is Phosphoglycerate kinase (387 aa).

Substrate-binding positions include 21 to 23 (DLN), arginine 36, 59 to 62 (HLGR), arginine 113, and arginine 146. ATP contacts are provided by residues lysine 197, glutamate 314, and 340-343 (GGDT).

Belongs to the phosphoglycerate kinase family. In terms of assembly, monomer.

Its subcellular location is the cytoplasm. It catalyses the reaction (2R)-3-phosphoglycerate + ATP = (2R)-3-phospho-glyceroyl phosphate + ADP. It participates in carbohydrate degradation; glycolysis; pyruvate from D-glyceraldehyde 3-phosphate: step 2/5. This is Phosphoglycerate kinase from Pseudomonas syringae pv. tomato (strain ATCC BAA-871 / DC3000).